A 246-amino-acid polypeptide reads, in one-letter code: 3'(2'),5'-bisphosphate nucleotidase CysQ (246 aa).

Positions 64, 83, 85, 86, and 205 each coordinate Mg(2+). A substrate-binding site is contributed by Glu64. Substrate contacts are provided by residues 85-88 and Asp205; that span reads LDGT.

It belongs to the inositol monophosphatase superfamily. CysQ family. The cofactor is Mg(2+).

Its subcellular location is the cell inner membrane. It carries out the reaction adenosine 3',5'-bisphosphate + H2O = AMP + phosphate. Converts adenosine-3',5'-bisphosphate (PAP) to AMP. This chain is 3'(2'),5'-bisphosphate nucleotidase CysQ, found in Shigella flexneri.